Consider the following 346-residue polypeptide: Acetylpolyamine amidohydrolase 1 (346 aa).

His161 serves as the catalytic Proton donor/acceptor. Residues Asp197, His199, and Asp286 each contribute to the Zn(2+) site.

Belongs to the histone deacetylase family. In terms of assembly, homodimer. Zn(2+) is required as a cofactor.

The enzyme catalyses N-acetylputrescine + H2O = putrescine + acetate. It catalyses the reaction N-acetylcadaverine + H2O = cadaverine + acetate. It carries out the reaction N(1)-acetylspermine + H2O = spermine + acetate. The catalysed reaction is N(1)-acetylspermidine + H2O = spermidine + acetate. It participates in amine and polyamine metabolism. In terms of biological role, catalyzes the deacetylation of acetylated polyamines such as N-acetylputrescine, N-acetylcadaverine, N(1)-acetylspermine and N(1)-acetylspermidine. Plays an important role in the metabolism of acetylated polyamines in P.aeruginosa. Is involved in the degradation pathways of N-acetylputrescine and N-acetylcadaverine, that allow P.aeruginosa to utilize these acetylpolyamines as a carbon source under glucose starvation. In vitro, can also hydrolyze artificial trifluoroacetylated and acetylated lysine-derivatives. The protein is Acetylpolyamine amidohydrolase 1 of Pseudomonas aeruginosa (strain ATCC 15692 / DSM 22644 / CIP 104116 / JCM 14847 / LMG 12228 / 1C / PRS 101 / PAO1).